A 479-amino-acid chain; its full sequence is Anaerobic nitric oxide reductase flavorubredoxin (479 aa).

A zinc metallo-hydrolase region spans residues 30–210; sequence LRGSSYNSYL…PFSRLVTPKI (181 aa). Positions 79, 81, 83, 147, 166, and 227 each coordinate Fe cation. The Flavodoxin-like domain maps to 254-393; sequence ITIFYDTMSN…LCRQHGRDIA (140 aa). FMN-binding positions include 260–264 and 342–369; these read TMSNN and AFGS…EMSL. A Rubredoxin-like domain is found at 423 to 474; the sequence is GPKMQCSVCQWIYDPAQGEPLQDVAPGTPWSDVPDNFLCPECSLGKDVFDVL. 4 residues coordinate Fe cation: C428, C431, C461, and C464.

This sequence in the N-terminal section; belongs to the zinc metallo-hydrolase group 3 family. Homotetramer. Requires Fe cation as cofactor. The cofactor is FMN.

The protein localises to the cytoplasm. It functions in the pathway nitrogen metabolism; nitric oxide reduction. In terms of biological role, anaerobic nitric oxide reductase; uses NADH to detoxify nitric oxide (NO), protecting several 4Fe-4S NO-sensitive enzymes. Has at least 2 reductase partners, only one of which (NorW, flavorubredoxin reductase) has been identified. NO probably binds to the di-iron center; electrons enter from the NorW at rubredoxin and are transferred sequentially to the FMN center and the di-iron center. Also able to function as an aerobic oxygen reductase. The polypeptide is Anaerobic nitric oxide reductase flavorubredoxin (Salmonella choleraesuis (strain SC-B67)).